A 265-amino-acid polypeptide reads, in one-letter code: Phosphonates import ATP-binding protein PhnC 1 (265 aa).

Residues 3-247 (LRLSGIELRH…HLDTLYANEQ (245 aa)) form the ABC transporter domain. 36–43 (GPSGAGKT) lines the ATP pocket. Residues 245–265 (NEQLSPQPAPDVSETPWTPRC) form a disordered region.

This sequence belongs to the ABC transporter superfamily. Phosphonates importer (TC 3.A.1.9.1) family. As to quaternary structure, the complex is composed of two ATP-binding proteins (PhnC), two transmembrane proteins (PhnE) and a solute-binding protein (PhnD).

The protein localises to the cell inner membrane. It catalyses the reaction phosphonate(out) + ATP + H2O = phosphonate(in) + ADP + phosphate + H(+). In terms of biological role, part of the ABC transporter complex PhnCDE involved in phosphonates import. Responsible for energy coupling to the transport system. This is Phosphonates import ATP-binding protein PhnC 1 from Pseudomonas savastanoi pv. phaseolicola (strain 1448A / Race 6) (Pseudomonas syringae pv. phaseolicola (strain 1448A / Race 6)).